The primary structure comprises 1089 residues: Probable transport protein MmpL8 (1089 aa).

The segment at 1-26 (MCDVLMQPVRTPRPSTNLRSKPLRPT) is disordered. 12 helical membrane-spanning segments follow: residues 44-64 (WVVI…VPSL), 222-242 (ITIL…TMVL), 257-277 (LVAI…IFMS), 316-336 (IGKV…GMVF), 349-369 (LGIS…ALMV), 400-420 (KTHL…AGLA), 555-575 (AIST…LLGG), 874-894 (IIAM…RAIV), 898-918 (YLIG…VIVF), 930-950 (IPGL…MLLI), 973-993 (GGVI…LVFA), and 996-1016 (GSVV…TFLV). A disordered region spans residues 1056–1078 (RTKRKPLLPKEEEEQSPPDDDDL). The span at 1066–1078 (EEEEQSPPDDDDL) shows a compositional bias: acidic residues.

The protein belongs to the resistance-nodulation-cell division (RND) (TC 2.A.6) family. MmpL subfamily.

The protein resides in the cell membrane. This chain is Probable transport protein MmpL8 (mmpL8), found in Mycobacterium tuberculosis (strain ATCC 25177 / H37Ra).